A 125-amino-acid chain; its full sequence is Protein JAZ13 (125 aa).

The short motif at 6-10 (LDLHL) is the EAR element. Residues 99-125 (KKRSKSFTLTPNYTSSTSSSSSSLHNF) are disordered. The segment covering 112 to 125 (TSSTSSSSSSLHNF) has biased composition (low complexity).

Monomer. Lack of homodimerization, and very weak or no interaction with AFPH2/NINJA and other JAZ proteins. Interacts (via EAR motif) with TPL. Interacts (via jas motif) with MYC2. In terms of processing, phosphorylated at multiple serine residues.

In terms of biological role, non-TIFY functional repressor of jasmonate (JA)-mediated growth and defense responses. Intrinsically resistant to JA-induced turnover, probably due to the absence of the canonical degron that strongly interacts with COI1 in the presence of JA-Ile in the TIFY/JAZ proteins. In Arabidopsis thaliana (Mouse-ear cress), this protein is Protein JAZ13.